The chain runs to 103 residues: NADH-quinone oxidoreductase subunit K (103 aa).

3 consecutive transmembrane segments (helical) span residues 6–26, 32–52, and 63–83; these read LSHF…GIFL, LVLL…FVAF, and IFVF…LAIL.

The protein belongs to the complex I subunit 4L family. As to quaternary structure, NDH-1 is composed of 14 different subunits. Subunits NuoA, H, J, K, L, M, N constitute the membrane sector of the complex.

Its subcellular location is the cell inner membrane. The enzyme catalyses a quinone + NADH + 5 H(+)(in) = a quinol + NAD(+) + 4 H(+)(out). Functionally, NDH-1 shuttles electrons from NADH, via FMN and iron-sulfur (Fe-S) centers, to quinones in the respiratory chain. The immediate electron acceptor for the enzyme in this species is believed to be ubiquinone. Couples the redox reaction to proton translocation (for every two electrons transferred, four hydrogen ions are translocated across the cytoplasmic membrane), and thus conserves the redox energy in a proton gradient. The sequence is that of NADH-quinone oxidoreductase subunit K from Dechloromonas aromatica (strain RCB).